Here is a 134-residue protein sequence, read N- to C-terminus: Probable RNA-binding protein MJ0652 (134 aa).

The region spanning 11-108 is the CRM domain; that stretch reads RKLTGKMKRM…REGWKKYLAK (98 aa).

The polypeptide is Probable RNA-binding protein MJ0652 (Methanocaldococcus jannaschii (strain ATCC 43067 / DSM 2661 / JAL-1 / JCM 10045 / NBRC 100440) (Methanococcus jannaschii)).